Consider the following 457-residue polypeptide: Multidrug resistance protein MdtK (457 aa).

12 helical membrane passes run 11–31 (LLALAIPVILAQIAQTAMGFV), 53–73 (IWLPAILFGHGLLLALTPVIA), 93–113 (WLAGCVSVLIMFVLWNAGYII), 127–147 (AVGYLRALLWGAPGYLFFQVA), 160–180 (GMVIGFLGLLVNIPVNYIFIY), 188–208 (LGGVGCGVATAAVYWVMFIAM), 243–263 (LPIALALFFEVTLFAVVALLV), 276–296 (IALNFSSLMFVLPMSLAAAVT), 314–334 (AARTGLGVGVCMAVITAIFTV), 357–377 (LMLLAAVYQISDSIQVIGSGI), 387–407 (IFFITFTAYWVLGLPSGYILA), and 418–438 (PAGFWMGFIIGLTSAAIMMML).

This sequence belongs to the multi antimicrobial extrusion (MATE) (TC 2.A.66.1) family. MdtK subfamily.

The protein resides in the cell inner membrane. Multidrug efflux pump that functions probably as a Na(+)/drug antiporter. This Citrobacter koseri (strain ATCC BAA-895 / CDC 4225-83 / SGSC4696) protein is Multidrug resistance protein MdtK.